Here is a 386-residue protein sequence, read N- to C-terminus: Succinate--CoA ligase [ADP-forming] subunit beta (386 aa).

The ATP-grasp domain occupies Lys9 to Glu244. Residues Lys46, Gly53–Gly55, Glu99, Cys102, and Glu107 contribute to the ATP site. Mg(2+)-binding residues include Asn199 and Asp213. Substrate contacts are provided by residues Asn264 and Gly321–Met323.

It belongs to the succinate/malate CoA ligase beta subunit family. Heterotetramer of two alpha and two beta subunits. The cofactor is Mg(2+).

The catalysed reaction is succinate + ATP + CoA = succinyl-CoA + ADP + phosphate. It catalyses the reaction GTP + succinate + CoA = succinyl-CoA + GDP + phosphate. The protein operates within carbohydrate metabolism; tricarboxylic acid cycle; succinate from succinyl-CoA (ligase route): step 1/1. Its function is as follows. Succinyl-CoA synthetase functions in the citric acid cycle (TCA), coupling the hydrolysis of succinyl-CoA to the synthesis of either ATP or GTP and thus represents the only step of substrate-level phosphorylation in the TCA. The beta subunit provides nucleotide specificity of the enzyme and binds the substrate succinate, while the binding sites for coenzyme A and phosphate are found in the alpha subunit. This Bacillus licheniformis (strain ATCC 14580 / DSM 13 / JCM 2505 / CCUG 7422 / NBRC 12200 / NCIMB 9375 / NCTC 10341 / NRRL NRS-1264 / Gibson 46) protein is Succinate--CoA ligase [ADP-forming] subunit beta.